We begin with the raw amino-acid sequence, 721 residues long: Polyribonucleotide nucleotidyltransferase (721 aa).

Mg(2+)-binding residues include D495 and D501. Residues 562–621 (PRLLSFRIDPELIGTVIGPGGRTIKGITERTNTKIDIEDGGIVTIASHDGAAAEAAQRII) form the KH domain. The 69-residue stretch at 631–699 (GEVFSGTITR…NRGRINLTLR (69 aa)) folds into the S1 motif domain. The segment at 700-721 (GVPQNGEETQSEPAPTPVAPLN) is disordered.

The protein belongs to the polyribonucleotide nucleotidyltransferase family. Mg(2+) serves as cofactor.

It is found in the cytoplasm. The catalysed reaction is RNA(n+1) + phosphate = RNA(n) + a ribonucleoside 5'-diphosphate. Functionally, involved in mRNA degradation. Catalyzes the phosphorolysis of single-stranded polyribonucleotides processively in the 3'- to 5'-direction. The protein is Polyribonucleotide nucleotidyltransferase of Prochlorococcus marinus (strain MIT 9303).